We begin with the raw amino-acid sequence, 102 residues long: RNA-binding protein Hfq (102 aa).

The Sm domain maps to 9 to 68 (DPFLNALRRERVPVSIYLVNGIKLQGQIESFDQFVILLKNTVSQMVYKHAISTVVPSRPV). Residues 63 to 102 (VPSRPVSHHSNNAGGSTSSNYHHGSSAQNTSAQQDSEENE) are disordered. The segment covering 70–96 (HHSNNAGGSTSSNYHHGSSAQNTSAQQ) has biased composition (polar residues).

It belongs to the Hfq family. Homohexamer.

Functionally, RNA chaperone that binds small regulatory RNA (sRNAs) and mRNAs to facilitate mRNA translational regulation in response to envelope stress, environmental stress and changes in metabolite concentrations. Also binds with high specificity to tRNAs. This chain is RNA-binding protein Hfq, found in Escherichia coli O17:K52:H18 (strain UMN026 / ExPEC).